We begin with the raw amino-acid sequence, 249 residues long: uncharacterized protein (249 aa).

Belongs to the AIM2 family.

The protein localises to the cytoplasm. It localises to the nucleus. This is an uncharacterized protein from Schizosaccharomyces pombe (strain 972 / ATCC 24843) (Fission yeast).